A 117-amino-acid polypeptide reads, in one-letter code: Minor capsid protein p17 (117 aa).

N-linked (GlcNAc...) asparagine; by host glycosylation occurs at Asn-12. A helical membrane pass occupies residues 39-59 (AIILGILILLVIILIIVAIVY). N-linked (GlcNAc...) asparagine; by host glycosylation is found at Asn-61 and Asn-97.

This sequence belongs to the asfivirus minor capsid protein p17 family. In terms of assembly, interacts with the minor capsid protein M1249L and with the hexon capsid protein p72 capsomers; these interactions form a rigid zipper structure that stabilizes the capsomers. Interacts with host STING1.

Its subcellular location is the virion membrane. It localises to the host endoplasmic reticulum membrane. Functionally, together with the penton and the other minor capsid proteins (M1249L, p49), forms a complicated network immediately below the outer capsid shell, stabilizing the whole capsid. Three copies of p17 encircle each p72 capsomer in the inner capsid shell, anchoring p72 capsomers on the inner membrane. Required for the assembly of the capsid and icosahedral morphogenesis. Additionally, inhibits the host cGAS-STING pathway through its interaction with STING1 and subsequent interference of the recruitment of downstream components TBK1 and IKBKE. The chain is Minor capsid protein p17 from Ornithodoros (relapsing fever ticks).